Consider the following 104-residue polypeptide: Zinc finger C2H2 protein ECU02_0310 (104 aa).

A C2H2-type zinc finger spans residues 56–80 (FYCCECDRHFITEKVLMEHKRSNPH).

The protein belongs to the ZNF593/BUD20 C2H2-type zinc-finger protein family. As to quaternary structure, associates with pre-60S ribosomal particles; released from the pre-60S particle very early in the cytoplasm.

The protein localises to the nucleus. Its subcellular location is the cytoplasm. Functionally, involved in pre-60S ribosomal particles maturation by promoting the nuclear export of the 60S ribosome. The sequence is that of Zinc finger C2H2 protein ECU02_0310 from Encephalitozoon cuniculi (strain GB-M1) (Microsporidian parasite).